The sequence spans 433 residues: T-box transcription factor T (433 aa).

The T-box DNA-binding region spans 49-217 (LWLRFKELTN…YNPFAKAFLD (169 aa)).

As to quaternary structure, monomer. Binds DNA as a monomer.

The protein localises to the nucleus. Its function is as follows. Involved in the transcriptional regulation of genes required for mesoderm formation and differentiation. Binds to a palindromic site (called T site) and activates gene transcription when bound to such a site. The chain is T-box transcription factor T from Gallus gallus (Chicken).